A 178-amino-acid chain; its full sequence is Ribosomal RNA small subunit methyltransferase G (178 aa).

S-adenosyl-L-methionine contacts are provided by residues Gly54, Leu59, 105 to 106, and Arg120; that span reads LE.

It belongs to the methyltransferase superfamily. RNA methyltransferase RsmG family.

The protein resides in the cytoplasm. It carries out the reaction guanosine(527) in 16S rRNA + S-adenosyl-L-methionine = N(7)-methylguanosine(527) in 16S rRNA + S-adenosyl-L-homocysteine. Specifically methylates the N7 position of guanine in position 527 of 16S rRNA. The sequence is that of Ribosomal RNA small subunit methyltransferase G from Helicobacter pylori (strain ATCC 700392 / 26695) (Campylobacter pylori).